A 148-amino-acid chain; its full sequence is MKVIFLKDVKGKGKKGEVKNVPDGYANNFLLKQGLAAEATNSSMKTLEAQKRKEEKDAAAELENAKQLKETLEKLTVELKAKSGEGGRLFGSITSKQIVDAMQKSHNIKLDKRKFEMDDAIRALGYTNVTVKLHPQVTATVKVHVSEQ.

It belongs to the bacterial ribosomal protein bL9 family.

Binds to the 23S rRNA. The polypeptide is Large ribosomal subunit protein bL9 (Bacillus cereus (strain ATCC 10987 / NRS 248)).